A 241-amino-acid chain; its full sequence is Pyridoxal phosphate phosphatase PHOSPHO2 (241 aa).

D8 functions as the Nucleophile in the catalytic mechanism. Positions 8 and 10 each coordinate Mg(2+). The active-site Proton donor is D10. Substrate contacts are provided by D19 and D99. D179 lines the Mg(2+) pocket.

It belongs to the HAD-like hydrolase superfamily. PHOSPHO family. The cofactor is Mg(2+).

The catalysed reaction is pyridoxal 5'-phosphate + H2O = pyridoxal + phosphate. Phosphatase that has high activity toward pyridoxal 5'-phosphate (PLP). Also active at much lower level toward pyrophosphate, phosphoethanolamine (PEA), phosphocholine (PCho), phospho-l-tyrosine, fructose-6-phosphate, p-nitrophenyl phosphate, and h-glycerophosphate. The chain is Pyridoxal phosphate phosphatase PHOSPHO2 (Phospho2) from Rattus norvegicus (Rat).